The following is a 375-amino-acid chain: Succinyl-diaminopimelate desuccinylase (375 aa).

H66 provides a ligand contact to Zn(2+). The active site involves D68. A Zn(2+)-binding site is contributed by D99. The Proton acceptor role is filled by E133. E134, E162, and H348 together coordinate Zn(2+).

This sequence belongs to the peptidase M20A family. DapE subfamily. Homodimer. Requires Zn(2+) as cofactor. Co(2+) serves as cofactor.

The catalysed reaction is N-succinyl-(2S,6S)-2,6-diaminopimelate + H2O = (2S,6S)-2,6-diaminopimelate + succinate. The protein operates within amino-acid biosynthesis; L-lysine biosynthesis via DAP pathway; LL-2,6-diaminopimelate from (S)-tetrahydrodipicolinate (succinylase route): step 3/3. Catalyzes the hydrolysis of N-succinyl-L,L-diaminopimelic acid (SDAP), forming succinate and LL-2,6-diaminopimelate (DAP), an intermediate involved in the bacterial biosynthesis of lysine and meso-diaminopimelic acid, an essential component of bacterial cell walls. The polypeptide is Succinyl-diaminopimelate desuccinylase (Buchnera aphidicola subsp. Acyrthosiphon pisum (strain 5A)).